The chain runs to 229 residues: Enolase-phosphatase E1 (229 aa).

This sequence belongs to the HAD-like hydrolase superfamily. MasA/MtnC family. As to quaternary structure, monomer. Mg(2+) serves as cofactor.

The catalysed reaction is 5-methylsulfanyl-2,3-dioxopentyl phosphate + H2O = 1,2-dihydroxy-5-(methylsulfanyl)pent-1-en-3-one + phosphate. Its pathway is amino-acid biosynthesis; L-methionine biosynthesis via salvage pathway; L-methionine from S-methyl-5-thio-alpha-D-ribose 1-phosphate: step 3/6. The protein operates within amino-acid biosynthesis; L-methionine biosynthesis via salvage pathway; L-methionine from S-methyl-5-thio-alpha-D-ribose 1-phosphate: step 4/6. Functionally, bifunctional enzyme that catalyzes the enolization of 2,3-diketo-5-methylthiopentyl-1-phosphate (DK-MTP-1-P) into the intermediate 2-hydroxy-3-keto-5-methylthiopentenyl-1-phosphate (HK-MTPenyl-1-P), which is then dephosphorylated to form the acireductone 1,2-dihydroxy-3-keto-5-methylthiopentene (DHK-MTPene). The protein is Enolase-phosphatase E1 of Erwinia tasmaniensis (strain DSM 17950 / CFBP 7177 / CIP 109463 / NCPPB 4357 / Et1/99).